A 162-amino-acid chain; its full sequence is uncharacterized protein (162 aa).

In terms of domain architecture, HTH asnC-type spans 6–99 (LDDLDRAILK…YVTKTLSGFP (94 aa)). Positions 25–44 (IAEISNQLKKPESTVHFRIK) form a DNA-binding region, H-T-H motif.

This is an uncharacterized protein from Pyrococcus horikoshii (strain ATCC 700860 / DSM 12428 / JCM 9974 / NBRC 100139 / OT-3).